The chain runs to 195 residues: dITP/XTP pyrophosphatase (195 aa).

8–13 contributes to the substrate binding site; it reads SGNAGK. The Mg(2+) site is built by Glu38 and Asp67. Asp67 acts as the Proton acceptor in catalysis. Substrate contacts are provided by residues Ser68, 146–149, Lys169, and 174–175; these read FGYD and HR.

Belongs to the HAM1 NTPase family. In terms of assembly, homodimer. Mg(2+) is required as a cofactor.

The catalysed reaction is XTP + H2O = XMP + diphosphate + H(+). The enzyme catalyses dITP + H2O = dIMP + diphosphate + H(+). It catalyses the reaction ITP + H2O = IMP + diphosphate + H(+). Pyrophosphatase that catalyzes the hydrolysis of nucleoside triphosphates to their monophosphate derivatives, with a high preference for the non-canonical purine nucleotides XTP (xanthosine triphosphate), dITP (deoxyinosine triphosphate) and ITP. Seems to function as a house-cleaning enzyme that removes non-canonical purine nucleotides from the nucleotide pool, thus preventing their incorporation into DNA/RNA and avoiding chromosomal lesions. This Parasynechococcus marenigrum (strain WH8102) protein is dITP/XTP pyrophosphatase.